Reading from the N-terminus, the 1039-residue chain is FHIP family protein GG24907 (1039 aa).

Phosphoserine occurs at positions 498 and 805. Disordered regions lie at residues 831–877, 904–945, and 957–984; these read ATPT…SASS, GISQ…SNSS, and SNTT…SEPA. 2 stretches are compositionally biased toward polar residues: residues 855 to 877 and 904 to 924; these read TSMF…SASS and GISQ…TQPQ. Residues 925–945 are compositionally biased toward low complexity; the sequence is AGASRTGATATSAAASGSNSS. Residues 957-966 show a composition bias toward polar residues; that stretch reads SNTTTHSAST.

Belongs to the FHIP family.

The protein is FHIP family protein GG24907 of Drosophila erecta (Fruit fly).